Here is a 347-residue protein sequence, read N- to C-terminus: Phosphate acyltransferase (347 aa).

The protein belongs to the PlsX family. In terms of assembly, homodimer. Probably interacts with PlsY.

It is found in the cytoplasm. It catalyses the reaction a fatty acyl-[ACP] + phosphate = an acyl phosphate + holo-[ACP]. It participates in lipid metabolism; phospholipid metabolism. Catalyzes the reversible formation of acyl-phosphate (acyl-PO(4)) from acyl-[acyl-carrier-protein] (acyl-ACP). This enzyme utilizes acyl-ACP as fatty acyl donor, but not acyl-CoA. The sequence is that of Phosphate acyltransferase from Oleidesulfovibrio alaskensis (strain ATCC BAA-1058 / DSM 17464 / G20) (Desulfovibrio alaskensis).